The sequence spans 71 residues: Translation initiation factor IF-1 (71 aa).

Positions 1-71 (MSKDDLIQFT…LTKGRVIHRH (71 aa)) constitute an S1-like domain.

Belongs to the IF-1 family. As to quaternary structure, component of the 30S ribosomal translation pre-initiation complex which assembles on the 30S ribosome in the order IF-2 and IF-3, IF-1 and N-formylmethionyl-tRNA(fMet); mRNA recruitment can occur at any time during PIC assembly.

The protein resides in the cytoplasm. One of the essential components for the initiation of protein synthesis. Stabilizes the binding of IF-2 and IF-3 on the 30S subunit to which N-formylmethionyl-tRNA(fMet) subsequently binds. Helps modulate mRNA selection, yielding the 30S pre-initiation complex (PIC). Upon addition of the 50S ribosomal subunit IF-1, IF-2 and IF-3 are released leaving the mature 70S translation initiation complex. In Rickettsia typhi (strain ATCC VR-144 / Wilmington), this protein is Translation initiation factor IF-1.